Here is a 555-residue protein sequence, read N- to C-terminus: CTP synthase (555 aa).

The tract at residues 1–272 (MQPTSTTTKH…DAYVVRKLDL (272 aa)) is amidoligase domain. Position 19 (Ser19) interacts with CTP. Ser19 is a binding site for UTP. ATP is bound by residues 20-25 (SLGKGL) and Asp77. Positions 77 and 146 each coordinate Mg(2+). CTP-binding positions include 153–155 (DIE), 193–198 (KTKPTQ), and Lys229. Residues 193–198 (KTKPTQ) and Lys229 each bind UTP. The Glutamine amidotransferase type-1 domain occupies 297–548 (TVALVGKYID…VKAAVARQVA (252 aa)). Gly360 contributes to the L-glutamine binding site. Cys387 (nucleophile; for glutamine hydrolysis) is an active-site residue. Residues 388-391 (LGLQ), Glu411, and Arg473 each bind L-glutamine. Catalysis depends on residues His521 and Glu523.

This sequence belongs to the CTP synthase family. Homotetramer.

It carries out the reaction UTP + L-glutamine + ATP + H2O = CTP + L-glutamate + ADP + phosphate + 2 H(+). The enzyme catalyses L-glutamine + H2O = L-glutamate + NH4(+). The catalysed reaction is UTP + NH4(+) + ATP = CTP + ADP + phosphate + 2 H(+). It functions in the pathway pyrimidine metabolism; CTP biosynthesis via de novo pathway; CTP from UDP: step 2/2. With respect to regulation, allosterically activated by GTP, when glutamine is the substrate; GTP has no effect on the reaction when ammonia is the substrate. The allosteric effector GTP functions by stabilizing the protein conformation that binds the tetrahedral intermediate(s) formed during glutamine hydrolysis. Inhibited by the product CTP, via allosteric rather than competitive inhibition. Its function is as follows. Catalyzes the ATP-dependent amination of UTP to CTP with either L-glutamine or ammonia as the source of nitrogen. Regulates intracellular CTP levels through interactions with the four ribonucleotide triphosphates. The polypeptide is CTP synthase (Streptomyces griseus subsp. griseus (strain JCM 4626 / CBS 651.72 / NBRC 13350 / KCC S-0626 / ISP 5235)).